Reading from the N-terminus, the 257-residue chain is Trans-aconitate 2-methyltransferase (257 aa).

The protein belongs to the methyltransferase superfamily. Tam family.

The protein localises to the cytoplasm. The enzyme catalyses trans-aconitate + S-adenosyl-L-methionine = (E)-3-(methoxycarbonyl)pent-2-enedioate + S-adenosyl-L-homocysteine. In terms of biological role, catalyzes the S-adenosylmethionine monomethyl esterification of trans-aconitate. This is Trans-aconitate 2-methyltransferase from Sinorhizobium medicae (strain WSM419) (Ensifer medicae).